An 89-amino-acid chain; its full sequence is Large ribosomal subunit protein eL34 (89 aa).

This sequence belongs to the eukaryotic ribosomal protein eL34 family.

This Methanococcus vannielii (strain ATCC 35089 / DSM 1224 / JCM 13029 / OCM 148 / SB) protein is Large ribosomal subunit protein eL34.